Reading from the N-terminus, the 101-residue chain is Small ribosomal subunit protein uS14 (101 aa).

Residues 1–10 show a composition bias toward basic and acidic residues; that stretch reads MAKKSSIEKN. The tract at residues 1-24 is disordered; the sequence is MAKKSSIEKNNRRKRLTKNAAPKR. Residues 11–24 are compositionally biased toward basic residues; the sequence is NRRKRLTKNAAPKR.

It belongs to the universal ribosomal protein uS14 family. Part of the 30S ribosomal subunit. Contacts proteins S3 and S10.

Its function is as follows. Binds 16S rRNA, required for the assembly of 30S particles and may also be responsible for determining the conformation of the 16S rRNA at the A site. This is Small ribosomal subunit protein uS14 from Rhodopseudomonas palustris (strain BisB18).